Reading from the N-terminus, the 478-residue chain is Methionine aminopeptidase 2 (478 aa).

The interval 1–122 (MAGVEQAASF…TDPPSVPICD (122 aa)) is disordered. Residue A2 is modified to N-acetylalanine. The span at 36 to 46 (KKKRRKKKKGK) shows a compositional bias: basic residues. S60 carries the phosphoserine; alternate modification. O-linked (GlcNAc) serine; alternate glycosylation is present at S60. The segment covering 80–92 (ERDDDDEDGDGDA) has biased composition (acidic residues). Residues 97 to 109 (GKKKKKKKKKRGP) show a composition bias toward basic residues. H231 lines the substrate pocket. 3 residues coordinate a divalent metal cation: D251, D262, and H331. H339 contacts substrate. The a divalent metal cation site is built by E364 and E459.

Belongs to the peptidase M24A family. Methionine aminopeptidase eukaryotic type 2 subfamily. Binds EIF2S1 at low magnesium concentrations. Interacts strongly with the eIF-2 gamma-subunit EIF2S3. Co(2+) serves as cofactor. The cofactor is Zn(2+). It depends on Mn(2+) as a cofactor. Requires Fe(2+) as cofactor. In terms of processing, contains approximately 12 O-linked N-acetylglucosamine (GlcNAc) residues. O-glycosylation is required for EIF2S1 binding.

It localises to the cytoplasm. The catalysed reaction is Release of N-terminal amino acids, preferentially methionine, from peptides and arylamides.. Its function is as follows. Cotranslationally removes the N-terminal methionine from nascent proteins. The N-terminal methionine is often cleaved when the second residue in the primary sequence is small and uncharged (Met-Ala-, Cys, Gly, Pro, Ser, Thr, or Val). In terms of biological role, protects eukaryotic initiation factor EIF2S1 from translation-inhibiting phosphorylation by inhibitory kinases such as EIF2AK2/PKR and EIF2AK1/HCR. Plays a critical role in the regulation of protein synthesis. This is Methionine aminopeptidase 2 (Metap2) from Mus musculus (Mouse).